Here is a 194-residue protein sequence, read N- to C-terminus: Phosphoheptose isomerase (194 aa).

The region spanning 37 to 194 is the SIS domain; sequence ISNSFKQGGK…LIEFEMAKQA (158 aa). 52-54 contributes to the substrate binding site; it reads NGG. Residues H61 and E65 each coordinate Zn(2+). Substrate-binding positions include E65, 93-94, 119-121, S124, and Q172; these read ND and STS. Zn(2+) is bound by residues Q172 and H180.

It belongs to the SIS family. GmhA subfamily. As to quaternary structure, homotetramer. Zn(2+) serves as cofactor.

The protein localises to the cytoplasm. The enzyme catalyses 2 D-sedoheptulose 7-phosphate = D-glycero-alpha-D-manno-heptose 7-phosphate + D-glycero-beta-D-manno-heptose 7-phosphate. Its pathway is carbohydrate biosynthesis; D-glycero-D-manno-heptose 7-phosphate biosynthesis; D-glycero-alpha-D-manno-heptose 7-phosphate and D-glycero-beta-D-manno-heptose 7-phosphate from sedoheptulose 7-phosphate: step 1/1. Functionally, catalyzes the isomerization of sedoheptulose 7-phosphate in D-glycero-D-manno-heptose 7-phosphate. This Haemophilus influenzae (strain 86-028NP) protein is Phosphoheptose isomerase.